The following is a 395-amino-acid chain: Immunity-related GTPase family M protein 2 (395 aa).

In terms of domain architecture, IRG-type G spans 63–239; the sequence is NKIKIAVTGD…PKLRETLQKD (177 aa). GTP-binding positions include 72 to 79, 97 to 101, and 179 to 181; these read DSGNGMSS, TGVVR, and KLD.

Belongs to the TRAFAC class dynamin-like GTPase superfamily. IRG family. Post-translationally, ubiquitinated; polyubiquitinated in the cytosol, promoting Gbp1 recruitment to the T.gondii parasitophorous vacuole membranes.

Its subcellular location is the cytoplasmic vesicle membrane. The protein resides in the golgi apparatus membrane. The protein localises to the cytoplasm. It localises to the cytosol. It carries out the reaction GTP + H2O = GDP + phosphate + H(+). Functionally, immunity-related GTPase that plays important roles in innate immunity and inflammatory response. Acts as a dynamin-like protein that binds to intracellular membranes and promotes remodeling and trafficking of those membranes. Required for clearance of acute protozoan and bacterial infections. Acts by participating to Tgtp1/Irgb6 and Gbp1-mediated parasite killing by promoting their accumulation on the T.gondii parasitophorous vacuole membranes. Also required for prolonged loading of ubiquitin and p62/Sqstm1 to parasitophorous vacuole membranes. Also acts as a key negative regulator of the inflammatory response by inhibiting the non-canonical inflammasome, thereby protecting against Casp11-driven septic shock during endotoxemia. The sequence is that of Immunity-related GTPase family M protein 2 from Mus musculus (Mouse).